The chain runs to 502 residues: Cysteine protease RavZ (502 aa).

Short sequence motifs (LIR) lie at residues Asp-9 to Glu-23 and Glu-23 to Lys-37. The tract at residues Ser-49–Leu-325 is catalytic region. Residues His-176 and Asp-197 contribute to the active site. The segment at Tyr-211–Arg-217 is alpha-3 helix. Residue Cys-258 is part of the active site. The segment at Pro-326 to Thr-431 is membrane targeting region. The LIR 3 motif lies at Asp-429 to Leu-443.

The protein resides in the secreted. The protein localises to the host cytoplasmic vesicle membrane. It catalyses the reaction [protein]-C-terminal L-amino acid-glycyl-phosphatidylethanolamide + H2O = a 1,2-diacyl-sn-glycero-3-phosphoethanolamine-N-glycine + [protein]-C-terminal &lt;stereo&gt;L-&lt;/stereo&gt;amino acid. The catalysed reaction is [protein]-C-terminal L-amino acid-glycyl-phosphatidylserine + H2O = 1,2-diacyl-sn-glycero-3-phospho-L-serine-N-glycine + [protein]-C-terminal &lt;stereo&gt;L-&lt;/stereo&gt;amino acid. In terms of biological role, cysteine protease effector that inhibits host cell autophagy by targeting lipid-conjugated ATG8 family proteins on pre-autophagosomal structures. Specifically hydrolyzes the amide bond between the C-terminal glycine residue and an adjacent aromatic residue in ATG8 proteins conjugated to phosphatidylethanolamine (PE), producing an ATG8 protein that cannot be reconjugated by host ATG7 and ATG3. Mechanistically, Ravz interacts with ATG8 proteins conjugated to PE via its LIR motifs, extracts them from the membrane of autophagosomes and integrates the PE part into its own lipid-binding site. It then removes the lipid component of the ATG8 protein. Also able to mediate delipidation of ATG8 proteins conjugated to phosphatidylserine (PS) during non-canonical autophagy. Inhibits host ubiquitin recruitment to bacteria-containing vacuoles, suggesting that it is able to mediate delipidation of other proteins in addition to ATG8 proteins. It is however not involved in the exclusion of autophagy adapters from bacteria-containing vacuoles decorated with ubiquitin. The sequence is that of Cysteine protease RavZ from Legionella pneumophila subsp. pneumophila (strain Philadelphia 1 / ATCC 33152 / DSM 7513).